Reading from the N-terminus, the 369-residue chain is Chaperone protein DnaJ (369 aa).

The region spanning 7 to 73 is the J domain; it reads DYYEILGVPR…QKRAMYDRFG (67 aa). The segment at 143–225 adopts a CR-type zinc-finger fold; that stretch reads GAEIPVEYER…CGGSGRVLRK (83 aa). Zn(2+) is bound by residues Cys156, Cys159, Cys173, Cys176, Cys199, Cys202, Cys213, and Cys216. 4 CXXCXGXG motif repeats span residues 156-163, 173-180, 199-206, and 213-220; these read CPRCGGTG, CPSCGGTG, CERCGGTG, and CHECGGSG.

This sequence belongs to the DnaJ family. As to quaternary structure, homodimer. Zn(2+) serves as cofactor.

Its subcellular location is the cytoplasm. In terms of biological role, participates actively in the response to hyperosmotic and heat shock by preventing the aggregation of stress-denatured proteins and by disaggregating proteins, also in an autonomous, DnaK-independent fashion. Unfolded proteins bind initially to DnaJ; upon interaction with the DnaJ-bound protein, DnaK hydrolyzes its bound ATP, resulting in the formation of a stable complex. GrpE releases ADP from DnaK; ATP binding to DnaK triggers the release of the substrate protein, thus completing the reaction cycle. Several rounds of ATP-dependent interactions between DnaJ, DnaK and GrpE are required for fully efficient folding. Also involved, together with DnaK and GrpE, in the DNA replication of plasmids through activation of initiation proteins. This is Chaperone protein DnaJ from Thermotoga maritima (strain ATCC 43589 / DSM 3109 / JCM 10099 / NBRC 100826 / MSB8).